The following is a 493-amino-acid chain: Neuronal pentraxin receptor (493 aa).

Over methionine 1–lysine 2 the chain is Cytoplasmic. Residues phenylalanine 3–isoleucine 23 traverse the membrane as a helical; Signal-anchor for type II membrane protein segment. The Extracellular portion of the chain corresponds to alanine 24 to alanine 493. Residues proline 37–valine 72 are disordered. N-linked (GlcNAc...) asparagine glycosylation occurs at asparagine 42. The segment covering serine 57–valine 72 has biased composition (low complexity). Residue asparagine 211 is glycosylated (N-linked (GlcNAc...) asparagine). Positions aspartate 285–cysteine 487 constitute a Pentraxin (PTX) domain. Residues cysteine 315 and cysteine 376 are joined by a disulfide bond. Residues asparagine 340, glutamate 418, glutamine 419, aspartate 420, and glutamine 430 each coordinate Ca(2+). Asparagine 456 carries an N-linked (GlcNAc...) asparagine glycan.

Heteropentamer with NPTX1 and/or NPTX2. Also binds taipoxin-associated calcium-binding protein 49 (TCBP49/RCN2). Interacts with KLHL2. Ca(2+) serves as cofactor. Post-translationally, ubiquitinated by a cullin-RING-based BCR (BTB-CUL3-RBX1) E3 ubiquitin-protein ligase complex containing KLHL2.

Its subcellular location is the membrane. May be involved in mediating uptake of synaptic material during synapse remodeling or in mediating the synaptic clustering of AMPA glutamate receptors at a subset of excitatory synapses. This chain is Neuronal pentraxin receptor (Nptxr), found in Mus musculus (Mouse).